The primary structure comprises 514 residues: Contact site A protein (514 aa).

The N-terminal stretch at 1–19 (MKFLLVLIILYNILNSAHS) is a signal peptide. A globular region spans residues 20 to 453 (APTITAVSNG…EATTSTTYTI (434 aa)). Positions 21–104 (PTITAVSNGK…TGGNGLFKYT (84 aa)) constitute an IPT/TIG 1 domain. Residues Asn-128, Asn-137, Asn-207, Asn-294, and Asn-399 are each glycosylated (N-linked (GlcNAc...) asparagine). An IPT/TIG 2 domain is found at 191–283 (PTITSITPLA…NQQPITFTYN (93 aa)). Composition is skewed to low complexity over residues 446–475 (TTST…TATP) and 483–494 (STPEETEAPSSA). Residues 446–494 (TTSTTYTIPDTPTPTDTATPSPTPTETATPSPTPKPTSTPEETEAPSSA) form a disordered region. 2 consecutive repeat copies span residues 462–469 (TATPSPTP) and 472–479 (TATPSPTP). The tract at residues 462-479 (TATPSPTPTETATPSPTP) is 2 X 8 AA repeats, Pro-rich. Ser-492 is lipidated: GPI-like-anchor amidated serine. Positions 493–514 (SATTLISPLSLIVIFISFVLLI) are cleaved as a propeptide — removed in mature form.

Post-translationally, phosphorylated on serine and N-glycosylated with two types of oligosaccharide chains. The GPI-like-anchor contains a phosphoceramide group, rather than a phosphatidyl group.

The protein resides in the cell membrane. This cell-surface glycoprotein mediates cell-cell binding via homophilic interaction. The polypeptide is Contact site A protein (csaA) (Dictyostelium discoideum (Social amoeba)).